A 265-amino-acid chain; its full sequence is MIESQRHSYHLVDPSPWPISGSLGALATTVGGVMYMHSFQGGATLLSLGLIFLLYTMFVWWRDVLRESTLEGHHTKAVQLGPRYGSILFIVSEVMSFFLFFWASSHSSLAPTVEIGGIWPPKGIGVLDPWEIPLLNTPILPSSGAAVTWAHHAILAGKEKRAVYALVATVLLALVSTGFQGMEYYQAPSTISDSIYGSTFLLATGFHGFHVIIGTLFLIVCGIRQYLGHLTKKHHVGFEAAAWYWHFVDVVRLFPFVSIYWWGGT.

The next 6 helical transmembrane spans lie at 16 to 36 (PWPI…VMYM), 41 to 61 (GGAT…FVWW), 84 to 104 (YGSI…FWAS), 162 to 182 (AVYA…FQGM), 200 to 220 (FLLA…FLIV), and 242 to 262 (AWYW…IYWW).

This sequence belongs to the cytochrome c oxidase subunit 3 family. In terms of assembly, component of the cytochrome c oxidase (complex IV, CIV), a multisubunit enzyme composed of a catalytic core of 3 subunits and several supernumerary subunits. The complex exists as a monomer or a dimer and forms supercomplexes (SCs) in the inner mitochondrial membrane with ubiquinol-cytochrome c oxidoreductase (cytochrome b-c1 complex, complex III, CIII).

It localises to the mitochondrion inner membrane. The catalysed reaction is 4 Fe(II)-[cytochrome c] + O2 + 8 H(+)(in) = 4 Fe(III)-[cytochrome c] + 2 H2O + 4 H(+)(out). Its function is as follows. Component of the cytochrome c oxidase, the last enzyme in the mitochondrial electron transport chain which drives oxidative phosphorylation. The respiratory chain contains 3 multisubunit complexes succinate dehydrogenase (complex II, CII), ubiquinol-cytochrome c oxidoreductase (cytochrome b-c1 complex, complex III, CIII) and cytochrome c oxidase (complex IV, CIV), that cooperate to transfer electrons derived from NADH and succinate to molecular oxygen, creating an electrochemical gradient over the inner membrane that drives transmembrane transport and the ATP synthase. Cytochrome c oxidase is the component of the respiratory chain that catalyzes the reduction of oxygen to water. Electrons originating from reduced cytochrome c in the intermembrane space (IMS) are transferred via the dinuclear copper A center (CU(A)) of subunit 2 and heme A of subunit 1 to the active site in subunit 1, a binuclear center (BNC) formed by heme A3 and copper B (CU(B)). The BNC reduces molecular oxygen to 2 water molecules using 4 electrons from cytochrome c in the IMS and 4 protons from the mitochondrial matrix. The chain is Cytochrome c oxidase subunit 3 (COX3) from Zea mays (Maize).